We begin with the raw amino-acid sequence, 354 residues long: Mating-type protein MAT-1 (354 aa).

The alpha box DNA-binding region spans 60 to 117 (KAKKALNAFVGFRCYYIAIPAFKQWPMKKLSNLISLLWDRDPNKSLWSLMAKAWSNIR).

Belongs to the MATALPHA1 family.

It localises to the nucleus. Functionally, mating type proteins are sequence specific DNA-binding proteins that act as master switches in fungal differentiation by controlling gene expression in a cell type-specific fashion. Transcriptional activator that induces the transcription of alpha-specific genes. The sequence is that of Mating-type protein MAT-1 (MAT1) from Cochliobolus cymbopogonis (Curvularia cymbopogonis).